A 1456-amino-acid polypeptide reads, in one-letter code: Sterol 3-beta-glucosyltransferase (1456 aa).

Over residues Glu60–Glu70 the composition is skewed to acidic residues. 2 disordered regions span residues Glu60–His113 and Leu128–Glu156. The segment covering Thr71–Pro104 has biased composition (low complexity). Residues Ser137–Ser146 show a composition bias toward basic and acidic residues. The region spanning Gln200–Arg247 is the GRAM 1 domain. One can recognise a PH domain in the interval Ala251 to Phe351. Disordered regions lie at residues His462–Pro512 and Asp524–Phe776. The segment covering Gln496–Leu508 has biased composition (basic and acidic residues). The segment covering Leu556–Phe567 has biased composition (polar residues). Composition is skewed to low complexity over residues Ser576–Ala606 and Gly647–Gly676. Residues Thr677–Gly696 show a composition bias toward gly residues. Positions Ala719–Pro735 are enriched in low complexity. In terms of domain architecture, GRAM 2 spans Glu827–Ser893. Positions 1004, 1005, 1007, 1279, 1307, 1310, 1323, 1326, 1327, 1328, 1347, and 1348 each coordinate UDP-alpha-D-glucose.

It belongs to the glycosyltransferase 28 family.

It is found in the cytoplasm. Its subcellular location is the membrane. The enzyme catalyses a sterol + UDP-alpha-D-glucose = a sterol 3-beta-D-glucoside + UDP + H(+). The catalysed reaction is ergosterol + UDP-alpha-D-glucose = ergosteryl 3-beta-D-glucoside + UDP + H(+). Its function is as follows. Sterol glycosyltransferase responsible for the glycosylation of ergosterol to form ergosterol-glucoside. In Yarrowia lipolytica (strain CLIB 122 / E 150) (Yeast), this protein is Sterol 3-beta-glucosyltransferase.